The following is a 136-amino-acid chain: Large ribosomal subunit protein uL16 (136 aa).

This sequence belongs to the universal ribosomal protein uL16 family. Part of the 50S ribosomal subunit.

Functionally, binds 23S rRNA and is also seen to make contacts with the A and possibly P site tRNAs. The protein is Large ribosomal subunit protein uL16 of Sodalis glossinidius (strain morsitans).